Reading from the N-terminus, the 156-residue chain is Cell division protein SepF (156 aa).

Residues 20-36 (AQYGYEKEQTDMKKQQD) show a composition bias toward basic and acidic residues. The interval 20 to 50 (AQYGYEKEQTDMKKQQDPPEQQDVTFPKAQP) is disordered.

The protein belongs to the SepF family. Homodimer. Interacts with FtsZ.

Its subcellular location is the cytoplasm. In terms of biological role, cell division protein that is part of the divisome complex and is recruited early to the Z-ring. Probably stimulates Z-ring formation, perhaps through the cross-linking of FtsZ protofilaments. Its function overlaps with FtsA. The sequence is that of Cell division protein SepF from Bacillus cereus (strain G9842).